Consider the following 339-residue polypeptide: tRNA N6-adenosine threonylcarbamoyltransferase (339 aa).

Histidine 111 and histidine 115 together coordinate Fe cation. Substrate contacts are provided by residues 134–138 (LVSGG), aspartate 167, glycine 180, and asparagine 272. Position 300 (aspartate 300) interacts with Fe cation.

It belongs to the KAE1 / TsaD family. It depends on Fe(2+) as a cofactor.

The protein resides in the cytoplasm. The enzyme catalyses L-threonylcarbamoyladenylate + adenosine(37) in tRNA = N(6)-L-threonylcarbamoyladenosine(37) in tRNA + AMP + H(+). Functionally, required for the formation of a threonylcarbamoyl group on adenosine at position 37 (t(6)A37) in tRNAs that read codons beginning with adenine. Is involved in the transfer of the threonylcarbamoyl moiety of threonylcarbamoyl-AMP (TC-AMP) to the N6 group of A37, together with TsaE and TsaB. TsaD likely plays a direct catalytic role in this reaction. The chain is tRNA N6-adenosine threonylcarbamoyltransferase from Sodalis glossinidius (strain morsitans).